Here is a 144-residue protein sequence, read N- to C-terminus: MQLTSFTDYGLRALIYLATLPEGELTSISKVTEVYGVSRNHMVKIINKLGQLGYVDTVRGKNGGIRLGMPANRIILGDVVRATEPLQIVNCSEDFCHITPACQLKGILASARSAFLAELDKHTLLSLIDNNPPLLVLLDRPVTE.

The region spanning 2–129 (QLTSFTDYGL…DKHTLLSLID (128 aa)) is the HTH rrf2-type domain. Residues 28 to 51 (ISKVTEVYGVSRNHMVKIINKLGQ) constitute a DNA-binding region (H-T-H motif). Positions 91, 96, and 102 each coordinate [2Fe-2S] cluster.

The cofactor is [2Fe-2S] cluster.

Its function is as follows. Nitric oxide-sensitive repressor of genes involved in protecting the cell against nitrosative stress. May require iron for activity. The polypeptide is HTH-type transcriptional repressor NsrR (Photobacterium profundum (strain SS9)).